Reading from the N-terminus, the 184-residue chain is ATP synthase subunit b, chloroplastic (184 aa).

Residues 27 to 49 traverse the membrane as a helical segment; the sequence is LATNPINLSVVLGVLIFFGKGVL.

It belongs to the ATPase B chain family. F-type ATPases have 2 components, F(1) - the catalytic core - and F(0) - the membrane proton channel. F(1) has five subunits: alpha(3), beta(3), gamma(1), delta(1), epsilon(1). F(0) has four main subunits: a(1), b(1), b'(1) and c(10-14). The alpha and beta chains form an alternating ring which encloses part of the gamma chain. F(1) is attached to F(0) by a central stalk formed by the gamma and epsilon chains, while a peripheral stalk is formed by the delta, b and b' chains.

The protein localises to the plastid. It is found in the chloroplast thylakoid membrane. F(1)F(0) ATP synthase produces ATP from ADP in the presence of a proton or sodium gradient. F-type ATPases consist of two structural domains, F(1) containing the extramembraneous catalytic core and F(0) containing the membrane proton channel, linked together by a central stalk and a peripheral stalk. During catalysis, ATP synthesis in the catalytic domain of F(1) is coupled via a rotary mechanism of the central stalk subunits to proton translocation. Its function is as follows. Component of the F(0) channel, it forms part of the peripheral stalk, linking F(1) to F(0). The protein is ATP synthase subunit b, chloroplastic of Oenothera elata subsp. hookeri (Hooker's evening primrose).